Reading from the N-terminus, the 1489-residue chain is MAEKKIAFRNRQDFSKIPATIQIPNLIEVQKRSYDRFLQMDLLPSERDDAGLQAVFQSVFPITDFRNVSQLEFVDYAIGNWECKCGHLKGLHHLRTTCKNCGATVVTDPFHPGDVLCHKCGTFNANTPDFCNKCGDPVGLQLKYDVAECEERGMTYSAPLKVTMRLTIFDKDPETNNRTIRDIKEQEVFFGDVPLMTQNGTFIINGTERVIVSQLHRSPGVFFETANNRTYFLGKIIPYRGSWVEFEYDQKNILYVRIDRKRKFLGTIFLRALGLRTDEDILRTFYTVDRIAVKDKKLYWTLEPGIERPTNLVGLKLSHAIKAKNGEEVAHSGRKVTASVLKEIQKHKISELEIELGDLEGAYVASDVIDTNTGEVLLEANQELTADKLSKMIDAGIGEVNVFFPERDDVGTVISATLRRDSVKTPQEALIEIYRKLRPGDPPTLDTATALFHGMFFDARKYDFSRVGRLKFNIKLFDRQDPTGLDKRTLDPDDFYHTIRYLLKLRRNLGAVDDIDHLGNRRVRAVGELLENQFRIGLVRMERAIKEKMSVYQEMSTAMPHDLVNAKPVMAAIREFFGSSQLSQFMDQTNPLSEITHKRRLSALGPGGLSRERAGFEVRDVHPTHYGRICPIETPEGPNIGLISSLSCYARINDYGFIESPYRRVKGGRVIDYVQVTHAGDSDYRVGDKMEKSEAQKANEELRGRKKRGIELEPYSFYLSAWEEDKWTIAQANAELDEKGKITSELVNARKAGNFVLISRDDIDYIDVSPKQLVSVAASLVPFLEHDDANRALMGANMQRQSVPLLRAEAPIVGTGMEGVTARDSGAVVLARRSGIIDSVDSERVIVRVEGEHHPMQLSREVGSDIYQLTKFKRSNQNTCINQKPIVKQGDHVKKGQVIADGPCTDHGELGLGRNVLVSFMPWRGYNFEDAILVSEKLVKEDYYTSVHIEEFEIEARDTKLGPEEITRDIPNVSESALRDLDESGVIRIGAPVKAGDILVGKVTPKGETQLTPEEKLLRAIFGEKAGDVRDASLTCPPGIEGVVVDVKIFSRKGQEKDERAKQIEGTQIAKLEKNLADEIRILTDERLKRLEGLLGAKVVQADLHDERTNKRLLTKDAVLDRETIERISTRNLKRIKYADKDPRVNEQIDEIEEMTSRQIDVLRKIVREKIEKLQKGDELPPGVIKLVKVYIAMKRKLSVGDKMAGRHGNKGVIARILPEEDMPYLEDGTPVEIVLNPLGVPSRMNVGQILETHLGWAGHELGKKIAEFMVENSEAGQVRKHLKQLFKDTAFVDHVTELDDEMLLKVAKGMQDGVFFGSAVFDGSTEAEIKSLLDQAGLPTSGKTFLYDGMTGDRFEQPVTVGYIYMLKLSHLVDDKIHARSIGPYSLITQQPLGGKAQFGGQRFGEMEVWALEAYGAAYILQELLTAKSDDVYGRTKIYEAIVKGEAAIEPGVPESFNVLIRELQSLCLDVELIKTKEKAAPAPVAAD.

The protein belongs to the RNA polymerase beta chain family. In terms of assembly, the RNAP catalytic core consists of 2 alpha, 1 beta, 1 beta' and 1 omega subunit. When a sigma factor is associated with the core the holoenzyme is formed, which can initiate transcription.

It catalyses the reaction RNA(n) + a ribonucleoside 5'-triphosphate = RNA(n+1) + diphosphate. DNA-dependent RNA polymerase catalyzes the transcription of DNA into RNA using the four ribonucleoside triphosphates as substrates. The sequence is that of DNA-directed RNA polymerase subunit beta from Koribacter versatilis (strain Ellin345).